We begin with the raw amino-acid sequence, 410 residues long: Chorismate synthase (410 aa).

2 residues coordinate NADP(+): arginine 43 and arginine 49. Residues 143–145, 264–265, glycine 308, 323–327, and arginine 349 each bind FMN; these read RSS, QA, and KPIST.

This sequence belongs to the chorismate synthase family. In terms of assembly, homotetramer. The cofactor is FMNH2.

It carries out the reaction 5-O-(1-carboxyvinyl)-3-phosphoshikimate = chorismate + phosphate. It participates in metabolic intermediate biosynthesis; chorismate biosynthesis; chorismate from D-erythrose 4-phosphate and phosphoenolpyruvate: step 7/7. Catalyzes the anti-1,4-elimination of the C-3 phosphate and the C-6 proR hydrogen from 5-enolpyruvylshikimate-3-phosphate (EPSP) to yield chorismate, which is the branch point compound that serves as the starting substrate for the three terminal pathways of aromatic amino acid biosynthesis. This reaction introduces a second double bond into the aromatic ring system. The polypeptide is Chorismate synthase (Corynebacterium glutamicum (strain ATCC 13032 / DSM 20300 / JCM 1318 / BCRC 11384 / CCUG 27702 / LMG 3730 / NBRC 12168 / NCIMB 10025 / NRRL B-2784 / 534)).